Consider the following 229-residue polypeptide: Claudin-25 (229 aa).

At 1 to 10 the chain is on the cytoplasmic side; that stretch reads MAWSFRAKVQ. A helical membrane pass occupies residues 11–31; sequence LGGLLLSLLGWVCSCVTTILP. Topologically, residues 32–81 are extracellular; sequence QWKTLNLELNEMETWIMGIWEVCVDREEVATVCKAFESFLSLPQELQVAR. A helical transmembrane segment spans residues 82 to 102; the sequence is ILMVASHGLGLLGLLLCSFGS. Residues 103 to 124 lie on the Cytoplasmic side of the membrane; sequence ECFQFHRIRWVFKRRLGLLGRT. A helical membrane pass occupies residues 125–145; it reads LEASASATTLLPVSWVAHATI. The Extracellular segment spans residues 146-164; that stretch reads QDFWDDSIPDIIPRWEFGG. A helical transmembrane segment spans residues 165–185; it reads ALYLGWAAGIFLALGGLLLIF. Topologically, residues 186-229 are cytoplasmic; sequence SACLGKEDVPFPLMAGPTVPLSCAPVEESDGSFHLMLRPRNLVI.

This sequence belongs to the claudin family.

It localises to the cell junction. The protein localises to the tight junction. The protein resides in the cell membrane. In terms of biological role, plays a major role in tight junction-specific obliteration of the intercellular space, through calcium-independent cell-adhesion activity. This Homo sapiens (Human) protein is Claudin-25 (CLDN25).